A 542-amino-acid polypeptide reads, in one-letter code: MMVMNTELRQDTPQFKRWEAVPQPLDFKVYIFNVTNPYEVQMGRRPRVVEVGPYVYFQYRHKDNIRFSRDRSKVHFSQQQMYVFDAESSYPLTENDQLTVLNMHMNSILQIIDTQAKETITNFRSDVNNTLEKIPVVRVIKRIIEKTTPIQSILQLAEDETYDSLRLINAELNRIFGRPDSMFLRTTPREFLFEGVPFCVNVIGIAKAICKEIEKRNTKTIRVQPDGSMKFSFFNHKNMTNDGTYTINTGIKEPALTQMIEYWNGRNTLDRWINQSAGSSSKCNKIVGTDGSGYPPFREGVERMTIFSSDICRTVDIKYVGPSSYEGIPALRFETDSHFLNEIGPEYGNDCYCVNRIPKAIVKNNGCLYKGALDLSTCFDAPVVLTHPHMMGAAQEYTSLIDGLYPDPEKHQIFVDVEPLTGTPLNGGKRVQFNMFLRRIDSIRLTDRLQTTLFPVLWIEEGIALNEDMVKLIDDSLMKVLTLLDIVQWVMIGSGLLLAIIMPIVYFIKRRPSSGSITPTLTTTTSTVSISDGGGLGGNPQK.

The Extracellular portion of the chain corresponds to 1 to 487 (MMVMNTELRQ…MKVLTLLDIV (487 aa)). Asparagine 33, asparagine 128, asparagine 238, and asparagine 274 each carry an N-linked (GlcNAc...) asparagine glycan. Disulfide bonds link cysteine 283–cysteine 351, cysteine 312–cysteine 378, and cysteine 353–cysteine 367. Residues 488 to 508 (QWVMIGSGLLLAIIMPIVYFI) traverse the membrane as a helical segment. Residues 509–542 (KRRPSSGSITPTLTTTTSTVSISDGGGLGGNPQK) are Cytoplasmic-facing.

It belongs to the CD36 family. In terms of tissue distribution, detected in the antenna, legs and wings. Higher levels of expression detected in male compared to female.

It is found in the cell membrane. Its function is as follows. Plays an olfactory role that is not restricted to pheromone sensitivity. This chain is Sensory neuron membrane protein 2, found in Aedes aegypti (Yellowfever mosquito).